A 70-amino-acid polypeptide reads, in one-letter code: DNA-directed RNA polymerase subunit epsilon (70 aa).

It belongs to the RNA polymerase subunit epsilon family. In terms of assembly, RNAP is composed of a core of 2 alpha, a beta and a beta' subunit. The core is associated with a delta subunit, and at least one of epsilon or omega. When a sigma factor is associated with the core the holoenzyme is formed, which can initiate transcription.

It catalyses the reaction RNA(n) + a ribonucleoside 5'-triphosphate = RNA(n+1) + diphosphate. A non-essential component of RNA polymerase (RNAP). The sequence is that of DNA-directed RNA polymerase subunit epsilon from Bacillus cereus (strain ATCC 14579 / DSM 31 / CCUG 7414 / JCM 2152 / NBRC 15305 / NCIMB 9373 / NCTC 2599 / NRRL B-3711).